The sequence spans 471 residues: Glutamate--tRNA ligase (471 aa).

A 'HIGH' region motif is present at residues 9-19 (PSPTGFLHVGG). Zn(2+)-binding residues include C98, C100, C125, and D127. Positions 237 to 241 (KLSKR) match the 'KMSKS' region motif. Residue K240 participates in ATP binding.

Belongs to the class-I aminoacyl-tRNA synthetase family. Glutamate--tRNA ligase type 1 subfamily. Monomer. The cofactor is Zn(2+).

The protein localises to the cytoplasm. It carries out the reaction tRNA(Glu) + L-glutamate + ATP = L-glutamyl-tRNA(Glu) + AMP + diphosphate. Functionally, catalyzes the attachment of glutamate to tRNA(Glu) in a two-step reaction: glutamate is first activated by ATP to form Glu-AMP and then transferred to the acceptor end of tRNA(Glu). This Aeromonas hydrophila subsp. hydrophila (strain ATCC 7966 / DSM 30187 / BCRC 13018 / CCUG 14551 / JCM 1027 / KCTC 2358 / NCIMB 9240 / NCTC 8049) protein is Glutamate--tRNA ligase.